The primary structure comprises 302 residues: Rab effector Noc2 (302 aa).

The RabBD domain occupies glutamine 41–glycine 158. The segment at glycine 89–glutamate 146 adopts an FYVE-type zinc-finger fold. Residues cysteine 95, cysteine 98, cysteine 112, cysteine 115, cysteine 120, cysteine 123, cysteine 138, and cysteine 141 each contribute to the Zn(2+) site. Disordered regions lie at residues aspartate 174–valine 194 and valine 206–tyrosine 302. Serine 248 carries the post-translational modification Phosphoserine. Over residues serine 258–serine 269 the composition is skewed to low complexity.

Recruited to dense-core vesicles through specific interaction with RAB27A in endocrine cells. Interacts with RAB3A, RAB3B, RAB3C and RAB3D. Interacts with ZYX. In terms of tissue distribution, highly expressed in pancreatic islets and parotid. High to moderate expression in adrenal gland, pituitary gland and ovary.

The protein resides in the cytoplasm. It is found in the cytoplasmic vesicle. It localises to the secretory vesicle membrane. Its function is as follows. Rab GTPase effector involved in the late steps of regulated exocytosis, both in endocrine and exocrine cells. Regulates the exocytosis of dense-core vesicles in neuroendocrine cells through interaction with RAB27A. Acts as a potential RAB3B effector protein in epithelial cells. This chain is Rab effector Noc2 (Rph3al), found in Rattus norvegicus (Rat).